An 888-amino-acid polypeptide reads, in one-letter code: DNA mismatch repair protein MutS (888 aa).

641 to 648 (GPNMAGKS) is a binding site for ATP.

This sequence belongs to the DNA mismatch repair MutS family.

In terms of biological role, this protein is involved in the repair of mismatches in DNA. It is possible that it carries out the mismatch recognition step. This protein has a weak ATPase activity. The protein is DNA mismatch repair protein MutS of Rickettsia bellii (strain OSU 85-389).